Here is a 172-residue protein sequence, read N- to C-terminus: Ribosome maturation factor RimM (172 aa).

The 74-residue stretch at 96 to 169 (PDEFYDHQLE…AIEIDPPEGL (74 aa)) folds into the PRC barrel domain.

Belongs to the RimM family. In terms of assembly, binds ribosomal protein uS19.

It localises to the cytoplasm. An accessory protein needed during the final step in the assembly of 30S ribosomal subunit, possibly for assembly of the head region. Essential for efficient processing of 16S rRNA. May be needed both before and after RbfA during the maturation of 16S rRNA. It has affinity for free ribosomal 30S subunits but not for 70S ribosomes. This Mycolicibacterium vanbaalenii (strain DSM 7251 / JCM 13017 / BCRC 16820 / KCTC 9966 / NRRL B-24157 / PYR-1) (Mycobacterium vanbaalenii) protein is Ribosome maturation factor RimM.